The following is a 354-amino-acid chain: Serine/threonine-protein phosphatase 2A activator 2 (354 aa).

The protein belongs to the PTPA-type PPIase family.

Its subcellular location is the cytoplasm. It carries out the reaction [protein]-peptidylproline (omega=180) = [protein]-peptidylproline (omega=0). PPIases accelerate the folding of proteins. It catalyzes the cis-trans isomerization of proline imidic peptide bonds in oligopeptides. Acts as a regulatory subunit for PP2A-like phosphatases modulating their activity or substrate specificity, probably by inducing a conformational change in the catalytic subunit, a direct target of the PPIase. Can reactivate inactive phosphatase PP2A-phosphatase methylesterase complexes (PP2Ai) in presence of ATP and Mg(2+) by dissociating the inactive form from the complex. This is Serine/threonine-protein phosphatase 2A activator 2 (RRD2) from Yarrowia lipolytica (strain CLIB 122 / E 150) (Yeast).